We begin with the raw amino-acid sequence, 625 residues long: tRNA uridine 5-carboxymethylaminomethyl modification enzyme MnmG (625 aa).

Position 11–16 (11–16 (GAGHAG)) interacts with FAD. 271-285 (GPRYCPSIETKIVTF) provides a ligand contact to NAD(+).

Belongs to the MnmG family. In terms of assembly, homodimer. Heterotetramer of two MnmE and two MnmG subunits. The cofactor is FAD.

The protein localises to the cytoplasm. Its function is as follows. NAD-binding protein involved in the addition of a carboxymethylaminomethyl (cmnm) group at the wobble position (U34) of certain tRNAs, forming tRNA-cmnm(5)s(2)U34. This Porphyromonas gingivalis (strain ATCC BAA-308 / W83) protein is tRNA uridine 5-carboxymethylaminomethyl modification enzyme MnmG.